The following is a 66-amino-acid chain: KEGYIVDYHTGCKYTCAKLGDNDYCVRECRLRYYQSAHGYCYAFACWCTHLYEAAVVWPLPNKRCK.

The 66-residue stretch at lysine 1–lysine 66 folds into the LCN-type CS-alpha/beta domain. 4 disulfides stabilise this stretch: cysteine 12-cysteine 65, cysteine 16-cysteine 41, cysteine 25-cysteine 46, and cysteine 29-cysteine 48. The residue at position 66 (lysine 66) is a Lysine amide.

As to expression, expressed by the venom gland.

The protein resides in the secreted. In terms of biological role, beta toxins bind voltage independently at site-4 of sodium channels (Nav) and shift the activation voltage toward more negative potentials, thereby affecting sodium channel activation CC and promoting spontaneous and repetitive firing. The chain is Beta-toxin ChFII.9 from Centruroides hirsutipalpus (Scorpion).